Here is a 212-residue protein sequence, read N- to C-terminus: Fe/S biogenesis protein NfuA (212 aa).

Cys-169 and Cys-172 together coordinate [4Fe-4S] cluster.

The protein belongs to the NfuA family. In terms of assembly, homodimer. It depends on [4Fe-4S] cluster as a cofactor.

Functionally, involved in iron-sulfur cluster biogenesis. Binds a 4Fe-4S cluster, can transfer this cluster to apoproteins, and thereby intervenes in the maturation of Fe/S proteins. Could also act as a scaffold/chaperone for damaged Fe/S proteins. This chain is Fe/S biogenesis protein NfuA, found in Acinetobacter baylyi (strain ATCC 33305 / BD413 / ADP1).